Consider the following 509-residue polypeptide: Erythropoietin receptor (509 aa).

An N-terminal signal peptide occupies residues Met1–Trp24. Over Ala25–Pro251 the chain is Extracellular. 2 cysteine pairs are disulfide-bonded: Cys52/Cys62 and Cys91/Cys107. Residues Pro148–Asp248 enclose the Fibronectin type-III domain. Asn184 carries an N-linked (GlcNAc...) asparagine glycan. Positions Trp234–Ser238 match the WSXWS motif motif. Residues Leu252 to Ser274 traverse the membrane as a helical segment. Residues His275–Ser509 are Cytoplasmic-facing. Lys282 is covalently cross-linked (Glycyl lysine isopeptide (Lys-Gly) (interchain with G-Cter in ubiquitin)). The Box 1 motif signature appears at Ile283–Glu291. A phosphotyrosine; by JAK2 mark is found at Tyr369 and Tyr427. The short motif at Leu453 to Leu458 is the ITIM motif element. Residue Lys454 forms a Glycyl lysine isopeptide (Lys-Gly) (interchain with G-Cter in ubiquitin) linkage. Phosphotyrosine; by JAK2 occurs at positions 455, 457, 469, 486, 490, and 505. The disordered stretch occupies residues Thr467 to Ser509. Low complexity predominate over residues Ser470 to Ser493.

The protein belongs to the type I cytokine receptor family. Type 1 subfamily. In terms of assembly, forms homodimers on EPO stimulation. The tyrosine-phosphorylated form interacts with several SH2 domain-containing proteins including LYN, the adapter protein SH2B2, PTPN6, PTPN11, JAK2, PI3 kinases, STAT5A/B, SOCS3, CRKL. Interacts with INPP5D/SHIP1. SH2B2 binding inhibits the JAK-STAT signaling. Interacts with RHEX; this interaction occurs in a erythropoietin (EPO)-dependent manner. Interacts with ATXN2L. In terms of processing, on EPO stimulation, phosphorylated on C-terminal tyrosine residues by JAK2. The phosphotyrosine motifs are also recruitment sites for several SH2-containing proteins and adapter proteins which mediate cell proliferation. Phosphorylation on Tyr-455 is required for PTPN6 interaction, Tyr-427 for PTPN11. Tyr-427 is also required for SOCS3 binding, but Tyr-455/Tyr-457 motif is the preferred binding site. Post-translationally, ubiquitinated by the ECS(SOCS2) complex following ligand-binding and phosphorylation by JAK2, leading to its degradation by the proteasome. Regulation by the ECS(SOCS2) complex acts as a negative feedback loop of erythropoietin-mediated signaling pathway. Ubiquitination at Lys-282 mediates receptor internalization, whereas ubiquitination at Lys-454 promotes trafficking of activated receptors to the lysosomes for degradation. Ubiquitinated by NOSIP; appears to be either multi-monoubiquitinated or polyubiquitinated. Ubiquitination mediates proliferation and survival of EPO-dependent cells.

The protein resides in the cell membrane. In terms of biological role, receptor for erythropoietin, which mediates erythropoietin-induced erythroblast proliferation and differentiation. Upon EPO stimulation, EPOR dimerizes triggering the JAK2/STAT5 signaling cascade. In some cell types, can also activate STAT1 and STAT3. May also activate the LYN tyrosine kinase. Isoform EPOR-T acts as a dominant-negative receptor of EPOR-mediated signaling. The sequence is that of Erythropoietin receptor (EPOR) from Sus scrofa (Pig).